A 75-amino-acid chain; its full sequence is UPF0512 protein C (75 aa).

It belongs to the UPF0512 family.

This is UPF0512 protein C from Dictyostelium discoideum (Social amoeba).